The following is a 560-amino-acid chain: Serine/threonine-protein kinase TOS3 (560 aa).

The region spanning 50-344 (FEILATLGNG…LADIKVHPFM (295 aa)) is the Protein kinase domain. ATP-binding positions include 56–64 (LGNGQYGKV) and Lys79. Catalysis depends on Asp189, which acts as the Proton acceptor.

Belongs to the protein kinase superfamily. Ser/Thr protein kinase family. Post-translationally, autophosphorylated.

It carries out the reaction L-seryl-[protein] + ATP = O-phospho-L-seryl-[protein] + ADP + H(+). The enzyme catalyses L-threonyl-[protein] + ATP = O-phospho-L-threonyl-[protein] + ADP + H(+). In terms of biological role, one of the three SNF1 protein kinases (with SAK1 and ELM1) which are required for growth on nonfermentable carbon sources and nonpreferred sugars and for response to environmental stress. Activates SNF1 by phosphorylation of its activation-loop 'Thr-210'. Required for the regulation by SNF1 of the transcription of a large set of genes, the modification the activity of metabolic enzymes, and the control of various nutrient-responsive cellular developmental processes. Also phosphorylates GAL83, MIG1 and SIP2. This is Serine/threonine-protein kinase TOS3 (TOS3) from Saccharomyces cerevisiae (strain YJM789) (Baker's yeast).